A 280-amino-acid chain; its full sequence is DegV domain-containing protein SPy_1698/M5005_Spy1391 (280 aa).

The region spanning 3 to 280 is the DegV domain; sequence WKIVTDSGCD…DGGLLMGYEI (278 aa). Residues Ser63 and Ser91 each contribute to the hexadecanoate site.

May bind long-chain fatty acids, such as palmitate, and may play a role in lipid transport or fatty acid metabolism. This chain is DegV domain-containing protein SPy_1698/M5005_Spy1391, found in Streptococcus pyogenes serotype M1.